We begin with the raw amino-acid sequence, 338 residues long: L-lysine 2,3-aminomutase (338 aa).

The region spanning 107 to 330 (HKYRNRLLFM…PKLAREIAGE (224 aa)) is the Radical SAM core domain. Positions 121, 125, and 128 each coordinate [4Fe-4S] cluster. Lysine 333 is subject to N6-(pyridoxal phosphate)lysine.

The protein belongs to the radical SAM superfamily. KamA family. Requires [4Fe-4S] cluster as cofactor. It depends on pyridoxal 5'-phosphate as a cofactor.

It carries out the reaction L-lysine = D-beta-lysine. In terms of biological role, with EpmA is involved in the beta-lysylation step of the post-translational modification of translation elongation factor P (EF-P) on 'Lys-34'. EpmB appears to act before EpmA. Displays lysine 2,3-aminomutase activity, producing (R)-beta-lysine from (S)-alpha-lysine (L-lysine). This is L-lysine 2,3-aminomutase (epmB) from Haemophilus influenzae (strain ATCC 51907 / DSM 11121 / KW20 / Rd).